The following is a 500-amino-acid chain: FAD-linked oxidoreductase chyH (500 aa).

Positions 1–20 (MRLQAVTAVAAWAVASACQS) are cleaved as a signal peptide. The FAD-binding PCMH-type domain occupies 65 to 235 (LEVPTVNIVI…TSVTSKTYDI (171 aa)). 4 N-linked (GlcNAc...) asparagine glycosylation sites follow: Asn-199, Asn-266, Asn-275, and Asn-383.

This sequence belongs to the oxygen-dependent FAD-linked oxidoreductase family. It depends on FAD as a cofactor.

It functions in the pathway pigment biosynthesis. FAD-linked oxidoreductase; part of the gene cluster that mediates the biosynthesis of the yellow pigment chrysogine. the NRPS chyA mediates the condensation of anthranilic acid and alanine into the intermediate 2-(2-aminopropanamido)benzoic acid. The remainder of the pathway is highly branched yielding at least 13 chrysogine-related compounds. The malonyl transferase chyE converts 2-(2-aminopropanamido)benzoic acid and 2-(2-aminopropanamido)benzamidine into 2-(2-(2-carboxyacetamido)propanamido)benzoic acid and 3-((1-((2-carbamoylphenyl)amino)-1-oxopropan-2-yl)amino)-3-oxopropanoic acid, respectively. ChyD is an amidase, being responsible for the amidation of the carboxylic acid moiety of 2-(2-aminopropanamido)benzoic acid, 2-(2-(2-carboxyacetamido)propanamido)benzoic acid and 2-(2-((4-amino-1-carboxy-4-oxobutyl)amino)propanamido)benzoic acid. ChyC is involved in the same reactions as ChyD, but plays a more minor role in the amidation reactions compared to chyD. The oxidoreductases chyH and chyM are involved in oxidation reactions that form N-pyruvoylanthranilamide from 2-(2-aminopropanamido)benzamidine and (1-((2-carbamoylphenyl)amino)-1-oxopropan-2-yl)glutamine, respectively. N-pyruvoylanthranilamide is further converted via two further branches in the pathway, yielding chrysogine and additional chrysogine-related coumpounds. Chrysogine is likely formed by a spontaneous ring closure from N-pyruvoylanthranilamide. The polypeptide is FAD-linked oxidoreductase chyH (Penicillium rubens (strain ATCC 28089 / DSM 1075 / NRRL 1951 / Wisconsin 54-1255) (Penicillium chrysogenum)).